The chain runs to 216 residues: MNFNKIDLDNWKRKEIFNHYLNQQTTFSITTEIDISVLYRNIKQEGYKFYPAFIFLVTRVINSNTAFRTGYNSDGELGYWDKLEPLYTIFDGVSKTFSGIWTPVKNDFKEFYDLYLSDVEKYNGSGKLFPKTPIPENAFSLSIIPWTSFTGFNLNINNNSNYLLPIITAGKFINKGNSIYLPLSLQVHHSVCDGYHAGLFMNSIQELSDRPNDWLL.

Catalysis depends on His189, which acts as the Proton acceptor.

The protein belongs to the chloramphenicol acetyltransferase family. In terms of assembly, homotrimer.

The enzyme catalyses chloramphenicol + acetyl-CoA = chloramphenicol 3-acetate + CoA. Its function is as follows. This enzyme is an effector of chloramphenicol resistance in bacteria. The chain is Chloramphenicol acetyltransferase (cat) from Staphylococcus aureus.